Here is a 139-residue protein sequence, read N- to C-terminus: MSKKIIYFLCTGNSCRSQMAEGFGKHYLSDEWEVYSAGMEAHGLNPNAVKAMNEVGIDISDQTSDLIHIDLLNNADFVVTLCGDAADKCPLTPAHVKREHWGFDDPAKAEGTKEERWMVFQRVRDEIGARIKKFAETGE.

Active-site nucleophile residues include Cys-10, Cys-82, and Cys-89. 2 cysteine pairs are disulfide-bonded: Cys-10-Cys-82 and Cys-82-Cys-89.

It belongs to the low molecular weight phosphotyrosine protein phosphatase family. Thioredoxin-coupled ArsC subfamily.

The protein resides in the cytoplasm. It carries out the reaction arsenate + [thioredoxin]-dithiol + H(+) = arsenite + [thioredoxin]-disulfide + H2O. Catalyzes the reduction of arsenate [As(V)] to arsenite [As(III)]. The sequence is that of Arsenate reductase from Shouchella clausii (strain KSM-K16) (Alkalihalobacillus clausii).